We begin with the raw amino-acid sequence, 328 residues long: Glucokinase (328 aa).

16–21 (ADIGGT) contacts ATP.

Belongs to the bacterial glucokinase family.

The protein resides in the cytoplasm. The enzyme catalyses D-glucose + ATP = D-glucose 6-phosphate + ADP + H(+). This chain is Glucokinase, found in Neisseria meningitidis serogroup C (strain 053442).